The sequence spans 356 residues: UDP-N-acetylglucosamine--N-acetylmuramyl-(pentapeptide) pyrophosphoryl-undecaprenol N-acetylglucosamine transferase (356 aa).

Residues 11 to 13 (TGG), asparagine 123, arginine 159, serine 187, isoleucine 241, 260 to 265 (ALTVAE), and glutamine 286 contribute to the UDP-N-acetyl-alpha-D-glucosamine site.

This sequence belongs to the glycosyltransferase 28 family. MurG subfamily.

Its subcellular location is the cell inner membrane. It catalyses the reaction di-trans,octa-cis-undecaprenyl diphospho-N-acetyl-alpha-D-muramoyl-L-alanyl-D-glutamyl-meso-2,6-diaminopimeloyl-D-alanyl-D-alanine + UDP-N-acetyl-alpha-D-glucosamine = di-trans,octa-cis-undecaprenyl diphospho-[N-acetyl-alpha-D-glucosaminyl-(1-&gt;4)]-N-acetyl-alpha-D-muramoyl-L-alanyl-D-glutamyl-meso-2,6-diaminopimeloyl-D-alanyl-D-alanine + UDP + H(+). Its pathway is cell wall biogenesis; peptidoglycan biosynthesis. Its function is as follows. Cell wall formation. Catalyzes the transfer of a GlcNAc subunit on undecaprenyl-pyrophosphoryl-MurNAc-pentapeptide (lipid intermediate I) to form undecaprenyl-pyrophosphoryl-MurNAc-(pentapeptide)GlcNAc (lipid intermediate II). The protein is UDP-N-acetylglucosamine--N-acetylmuramyl-(pentapeptide) pyrophosphoryl-undecaprenol N-acetylglucosamine transferase of Azoarcus sp. (strain BH72).